Consider the following 308-residue polypeptide: Reticulon-like protein 1 (308 aa).

Composition is skewed to polar residues over residues 1-17 and 41-66; these read MSEQHSLNPFESGSVTA and PSTELPSATSFPSALPNSENPVIQNI. Disordered regions lie at residues 1–22 and 41–92; these read MSEQHSLNPFESGSVTASDVAA and PSTE…CPVS. Residue asparagine 65 is glycosylated (N-linked (GlcNAc...) asparagine). The segment covering 67–81 has biased composition (low complexity); it reads SSSSSEPHHTSQSTP. N-linked (GlcNAc...) asparagine glycosylation is found at asparagine 113 and asparagine 135. Residues 127-308 form the Reticulon domain; it reads LWSVLTWKNT…TETINTTVNK (182 aa). Helical transmembrane passes span 138–158, 166–186, 233–253, and 255–275; these read CSFSTLMSILALVYVPSWINL, FRYVFLITSIIEFGGLFASNG, PILTFTASVAAFIEFFLSGFL, and YKSLFVWNVLFAFILPRLYVC. Residue asparagine 303 is glycosylated (N-linked (GlcNAc...) asparagine).

As to quaternary structure, interacts with TTS1 and YOP1.

The protein resides in the endoplasmic reticulum membrane. Its subcellular location is the nucleus membrane. Required for the correct positioning of the cellular division plane by delimiting the actomyosin ring assembly at the cell equator. Overexpression causes cell lysis. The sequence is that of Reticulon-like protein 1 (rtn1) from Schizosaccharomyces pombe (strain 972 / ATCC 24843) (Fission yeast).